Here is a 204-residue protein sequence, read N- to C-terminus: Intraflagellar transport protein 27 (204 aa).

GTP contacts are provided by residues 23 to 30, 75 to 79, and 136 to 139; these read GEATVGKS, DTAGS, and NKTD.

It belongs to the small GTPase superfamily. Rab family. As to quaternary structure, component of the IFT complex B, the core composed of IFT25, IFT27, IFT46, IFT52, IFT74, IFT81 and IFT88 as well as associated subunits IFT20, IFT57, IFT80 and IFT172. Interacts with IFT25; the interaction is direct.

It is found in the cell projection. Its subcellular location is the cilium. The protein resides in the flagellum. It localises to the cytoplasm. The protein localises to the cytoskeleton. It is found in the flagellum basal body. Its function is as follows. Small GTPase-like component of the intraflagellar transport (IFT) complex B. Forms a subcomplex within the IFT complex B with IFT25. Has very low GTPase activity either because it lacks the conserved catalytic Gln in position 79 or because it requires some GTPase-activating protein (GAP) for GTP turnover. The chain is Intraflagellar transport protein 27 (IFT27) from Chlamydomonas reinhardtii (Chlamydomonas smithii).